The sequence spans 145 residues: 3-dehydroquinate dehydratase (145 aa).

The active-site Proton acceptor is the tyrosine 23. Asparagine 75, histidine 81, and aspartate 88 together coordinate substrate. Catalysis depends on histidine 101, which acts as the Proton donor. Substrate-binding positions include 102-103 (LS) and arginine 112.

Belongs to the type-II 3-dehydroquinase family. As to quaternary structure, homododecamer.

The catalysed reaction is 3-dehydroquinate = 3-dehydroshikimate + H2O. Its pathway is metabolic intermediate biosynthesis; chorismate biosynthesis; chorismate from D-erythrose 4-phosphate and phosphoenolpyruvate: step 3/7. Its function is as follows. Catalyzes a trans-dehydration via an enolate intermediate. This chain is 3-dehydroquinate dehydratase, found in Legionella pneumophila (strain Paris).